A 121-amino-acid polypeptide reads, in one-letter code: Ribonuclease P protein component (121 aa).

The protein belongs to the RnpA family. In terms of assembly, consists of a catalytic RNA component (M1 or rnpB) and a protein subunit.

It catalyses the reaction Endonucleolytic cleavage of RNA, removing 5'-extranucleotides from tRNA precursor.. RNaseP catalyzes the removal of the 5'-leader sequence from pre-tRNA to produce the mature 5'-terminus. It can also cleave other RNA substrates such as 4.5S RNA. The protein component plays an auxiliary but essential role in vivo by binding to the 5'-leader sequence and broadening the substrate specificity of the ribozyme. In Neisseria meningitidis serogroup B (strain ATCC BAA-335 / MC58), this protein is Ribonuclease P protein component.